A 354-amino-acid chain; its full sequence is Uroporphyrinogen decarboxylase (354 aa).

Residues 27 to 31, aspartate 77, tyrosine 154, serine 209, and histidine 327 each bind substrate; that span reads RQAGR.

Belongs to the uroporphyrinogen decarboxylase family. As to quaternary structure, homodimer.

The protein resides in the cytoplasm. It carries out the reaction uroporphyrinogen III + 4 H(+) = coproporphyrinogen III + 4 CO2. Its pathway is porphyrin-containing compound metabolism; protoporphyrin-IX biosynthesis; coproporphyrinogen-III from 5-aminolevulinate: step 4/4. Functionally, catalyzes the decarboxylation of four acetate groups of uroporphyrinogen-III to yield coproporphyrinogen-III. The chain is Uroporphyrinogen decarboxylase from Shewanella pealeana (strain ATCC 700345 / ANG-SQ1).